The chain runs to 308 residues: Mitochondrial import receptor subunit TOM40B (308 aa).

The segment at P281–G308 is required for mitochondrial targeting.

This sequence belongs to the Tom40 family. As to quaternary structure, forms part of the preprotein translocase of the outer mitochondrial membrane (TOM complex) containing TOMM22, TOMM40, TOMM40L and TOMM70. Interacts with mitochondrial targeting sequences. As to expression, widely expressed. Higher levels in heart, brain and liver, very low level in testis.

It is found in the mitochondrion outer membrane. Potential channel-forming protein implicated in import of protein precursors into mitochondria. This is Mitochondrial import receptor subunit TOM40B from Rattus norvegicus (Rat).